We begin with the raw amino-acid sequence, 910 residues long: Eukaryotic translation initiation factor 3 subunit C (910 aa).

Positions 1–21 (MSRFFANGSESESESSEEEIQ) are disordered. Residues 11-20 (SESESSEEEI) are compositionally biased toward acidic residues. Phosphoserine is present on residues S34, S165, S176, and S185. The tract at residues 157-279 (FREAPDQESE…IRKRAEDDED (123 aa)) is disordered. The segment covering 162 to 186 (DQESEAEDEVVALESDGGDAGDDSD) has biased composition (acidic residues). Low complexity predominate over residues 194-207 (AVPKAVKSAPAKAA). The span at 209-235 (ADDDDSDDSIDWDSDSESETESSDDEN) shows a compositional bias: acidic residues. Residues 240–268 (MRERFLKRTTEKEEKDDDKRKDKRKEQKT) show a composition bias toward basic and acidic residues. In terms of domain architecture, PCI spans 639 to 815 (FHMHINLELL…ETVGMHRSEP (177 aa)). The interval 847-910 (FFQRGNMGNR…QQQVQTIDEE (64 aa)) is disordered. A compositionally biased stretch (low complexity) spans 862–874 (NRNQNNQGGNWLG). Basic residues predominate over residues 882-891 (RNRNQRGHHK). Positions 895-910 (DRQQQQQQQVQTIDEE) are enriched in low complexity.

The protein belongs to the eIF-3 subunit C family. Component of the eukaryotic translation initiation factor 3 (eIF-3) complex. The eIF-3 complex interacts with pix.

The protein resides in the cytoplasm. Its function is as follows. Component of the eukaryotic translation initiation factor 3 (eIF-3) complex, which is involved in protein synthesis of a specialized repertoire of mRNAs and, together with other initiation factors, stimulates binding of mRNA and methionyl-tRNAi to the 40S ribosome. The eIF-3 complex specifically targets and initiates translation of a subset of mRNAs involved in cell proliferation. This Drosophila melanogaster (Fruit fly) protein is Eukaryotic translation initiation factor 3 subunit C.